We begin with the raw amino-acid sequence, 725 residues long: NAD(+) hydrolase SARM1 (725 aa).

The transit peptide at 1–27 (MVLTILFSAYKLCRFFAMSSPRPGAER) directs the protein to the mitochondrion. Residues 60 to 100 (EVQGALERALPELQQALSALKQAGGGRAVGAGLAEVFQLVE) form an ARM 1 repeat. Residues Trp103, Arg110, 149 to 158 (EQILVAENRR), and 191 to 194 (HMFK) contribute to the NAD(+) site. ARM repeat units follow at residues 114 to 153 (QGLC…QILV), 155 to 194 (ENRR…HMFK), 197 to 236 (EETC…NCAM), 238 to 281 (GGQA…LATN), 282 to 315 (KEVE…CLVD), 316 to 355 (ASDT…AEAV), and 360 to 403 (KNRN…EEVP). SAM domains are found at residues 413 to 477 (WKEA…LKTF) and 483 to 549 (CDRS…MLHS). Ser549 and Ser559 each carry phosphoserine. Residues 561–704 (DVPDVFISYR…KIIRFLQGRS (144 aa)) form the TIR domain. NAD(+)-binding positions include 570 to 571 (RR) and Glu600. Glu643 is an active-site residue. Residues 705 to 725 (SRDSSAGSDTSLEGAAPMGPT) form a disordered region.

This sequence belongs to the SARM1 family. In terms of assembly, homooctamer; forms an octameric ring via SAM domains. Interacts with TICAM1/TRIF and thereby interferes with TICAM1/TRIF function. Interacts with MAPK10/JNK3 and SDC2 (via cytoplasmic domain). Phosphorylation at Ser-549 by JNK kinases (MAPK8, MAPK9 and /or MAPK10) enhance the NAD(+) hydrolase (NADase) activity. Phosphorylation at Ser-549 and subsequent activation takes place in response to oxidative stress conditions and inhibits mitochondrial respiration. Highest expression seen in the spleen and the brain, followed by lung, kidney, liver and other tissues.

It is found in the cytoplasm. Its subcellular location is the cell projection. The protein resides in the axon. The protein localises to the dendrite. It localises to the synapse. It is found in the mitochondrion. The catalysed reaction is NAD(+) + H2O = ADP-D-ribose + nicotinamide + H(+). It carries out the reaction NAD(+) = cyclic ADP-beta-D-ribose + nicotinamide + H(+). It catalyses the reaction NADP(+) + H2O = ADP-D-ribose 2'-phosphate + nicotinamide + H(+). With respect to regulation, autoinhibited: in the inactive state, the enzymatic TIR domain is held apart by the autoinhibiting ARM repeats. NAD(+)-binding to ARM repeats maintains an inactive state by promoting interaction between ARM repeats and the TIR domain, thereby facilitating inhibition of the enzymatic TIR domain. Following activation, possibly by nicotinamide mononucleotide (NMN), auto-inhibitory interactions are released, allowing self-association of the TIR domains and subsequent activation of the NAD(+) hydrolase (NADase) activity. Self-association of TIR domains is facilitated by the octamer of SAM domains. Functionally, NAD(+) hydrolase, which plays a key role in axonal degeneration following injury by regulating NAD(+) metabolism. Acts as a negative regulator of MYD88- and TRIF-dependent toll-like receptor signaling pathway by promoting Wallerian degeneration, an injury-induced form of programmed subcellular death which involves degeneration of an axon distal to the injury site. Wallerian degeneration is triggered by NAD(+) depletion: in response to injury, SARM1 is activated and catalyzes cleavage of NAD(+) into ADP-D-ribose (ADPR), cyclic ADPR (cADPR) and nicotinamide; NAD(+) cleavage promoting cytoskeletal degradation and axon destruction. Also able to hydrolyze NADP(+), but not other NAD(+)-related molecules. Can activate neuronal cell death in response to stress. Regulates dendritic arborization through the MAPK4-JNK pathway. Involved in innate immune response: inhibits both TICAM1/TRIF- and MYD88-dependent activation of JUN/AP-1, TRIF-dependent activation of NF-kappa-B and IRF3, and the phosphorylation of MAPK14/p38. In Sus scrofa (Pig), this protein is NAD(+) hydrolase SARM1.